The primary structure comprises 171 residues: Protein TraV (171 aa).

Residues 1–18 form the signal peptide; the sequence is MKQTSFFIPLLGTLLLYG. The N-palmitoyl cysteine moiety is linked to residue Cys-19. Residue Cys-19 is the site of S-diacylglycerol cysteine attachment.

Its subcellular location is the cell outer membrane. Involved in F pilus assembly. Appears to facilitate the polymerization of inner membrane-located pilin subunits into extracellular F pilus filaments. The protein is Protein TraV (traV) of Escherichia coli (strain K12).